A 93-amino-acid polypeptide reads, in one-letter code: UPF0367 protein tsr0804 (93 aa).

It belongs to the UPF0367 family.

The polypeptide is UPF0367 protein tsr0804 (Thermosynechococcus vestitus (strain NIES-2133 / IAM M-273 / BP-1)).